We begin with the raw amino-acid sequence, 113 residues long: Hydrogenase maturation factor HybF (113 aa).

Ni(2+) is bound by residues His-2 and Glu-3. 4 residues coordinate Zn(2+): Cys-73, Cys-76, Cys-89, and Cys-92.

It belongs to the HypA/HybF family. HybF subfamily.

Involved in the maturation of [NiFe] hydrogenases. Required for nickel insertion into the metal center of the hydrogenase. This Escherichia coli O6:H1 (strain CFT073 / ATCC 700928 / UPEC) protein is Hydrogenase maturation factor HybF.